The chain runs to 321 residues: Malate dehydrogenase (321 aa).

NAD(+)-binding positions include 10–15 (GSGMIG) and D34. Residues R83 and R89 each contribute to the substrate site. NAD(+)-binding positions include N96 and 119 to 121 (ITN). Residues N121 and R152 each contribute to the substrate site. The Proton acceptor role is filled by H176.

It belongs to the LDH/MDH superfamily. MDH type 3 family.

The catalysed reaction is (S)-malate + NAD(+) = oxaloacetate + NADH + H(+). Its function is as follows. Catalyzes the reversible oxidation of malate to oxaloacetate. In Sinorhizobium fredii (strain NBRC 101917 / NGR234), this protein is Malate dehydrogenase.